We begin with the raw amino-acid sequence, 100 residues long: Urease subunit gamma (100 aa).

Belongs to the urease gamma subunit family. In terms of assembly, heterotrimer of UreA (gamma), UreB (beta) and UreC (alpha) subunits. Three heterotrimers associate to form the active enzyme.

The protein localises to the cytoplasm. The catalysed reaction is urea + 2 H2O + H(+) = hydrogencarbonate + 2 NH4(+). It participates in nitrogen metabolism; urea degradation; CO(2) and NH(3) from urea (urease route): step 1/1. This is Urease subunit gamma from Pseudomonas aeruginosa (strain LESB58).